The sequence spans 407 residues: tRNA (guanine-N(7)-)-methyltransferase non-catalytic subunit wuho (407 aa).

WD repeat units follow at residues 83–124, 171–210, and 214–252; these read AIEV…ARLL, GHLS…DIHS, and GHKE…ELLI.

Belongs to the WD repeat TRM82 family. Forms a heterodimer with the catalytic subunit Mettl1. Interacts with mei-P26 and weakly interacts with bgcn; required for the function or formation of the mei-P26-bgcn-bam-sxl complex. Interacts with nanos; may be involved in mei-P26-dependent derepression of the BMP signaling pathway. Interacts with Myc; the interaction may be mediated by mei-P26 and may be involved in the regulation of ribosome biogenesis. In terms of tissue distribution, in testis, it is present at high level in hub cells, a niche for germline stem cells of testis. Ubiquitously expressed in all testicular cells throughout spermatogenesis. Ubiquitously expressed in all germline and somatic cells of the ovary.

It is found in the nucleus. Its subcellular location is the cytoplasm. Its pathway is tRNA modification; N(7)-methylguanine-tRNA biosynthesis. Required for the Mettl1-dependent formation of N(7)-methylguanine at position 46 (m7G46) in tRNA. In the Mettl1-wuho methyltransferase complex, it is required to stabilize and induce conformational changes of the catalytic subunit. Required for binding of nanos mRNA and repression of translation by the mei-P26-bgcn-bam-sxl complex. May cooperate with mei-P26 and nanos to derepress the BMP signaling pathway. May cooperate with mei-P26 to suppress expression of a subset of microRNAs. May cooperate with mei-P26 to regulate bam expression levels in germline cells during gametogenesis. Required to promote mitosis to meiosis transition during gametogenesis. May regulate germline cell division in part by regulating ribosome biogenesis. The protein is tRNA (guanine-N(7)-)-methyltransferase non-catalytic subunit wuho of Drosophila ananassae (Fruit fly).